Reading from the N-terminus, the 140-residue chain is Nucleoside diphosphate kinase (140 aa).

Positions 11, 59, 87, 93, 104, and 114 each coordinate ATP. The active-site Pros-phosphohistidine intermediate is His-117.

It belongs to the NDK family. As to quaternary structure, homotetramer. It depends on Mg(2+) as a cofactor.

It localises to the cytoplasm. It carries out the reaction a 2'-deoxyribonucleoside 5'-diphosphate + ATP = a 2'-deoxyribonucleoside 5'-triphosphate + ADP. The enzyme catalyses a ribonucleoside 5'-diphosphate + ATP = a ribonucleoside 5'-triphosphate + ADP. Functionally, major role in the synthesis of nucleoside triphosphates other than ATP. The ATP gamma phosphate is transferred to the NDP beta phosphate via a ping-pong mechanism, using a phosphorylated active-site intermediate. This chain is Nucleoside diphosphate kinase, found in Rickettsia akari (strain Hartford).